A 237-amino-acid polypeptide reads, in one-letter code: Putative exosome complex component rrp40 (237 aa).

The region spanning 67 to 137 is the S1 motif domain; it reads EDMVIGTIIE…EPEVVCLSQK (71 aa).

The protein belongs to the RRP40 family. Component of the RNA exosome complex.

Its subcellular location is the cytoplasm. It is found in the nucleus. It localises to the nucleolus. Non-catalytic component of the RNA exosome complex which has 3'-&gt;5' exoribonuclease activity and participates in a multitude of cellular RNA processing and degradation events. In Dictyostelium discoideum (Social amoeba), this protein is Putative exosome complex component rrp40 (exosc3).